The chain runs to 419 residues: UDP-N-acetylglucosamine 1-carboxyvinyltransferase (419 aa).

22 to 23 (KN) provides a ligand contact to phosphoenolpyruvate. Arg91 serves as a coordination point for UDP-N-acetyl-alpha-D-glucosamine. Residue Cys115 is the Proton donor of the active site. Cys115 carries the post-translational modification 2-(S-cysteinyl)pyruvic acid O-phosphothioketal. Residues 120–124 (RPVDL), 160–163 (KVSV), Asp305, and Ile327 each bind UDP-N-acetyl-alpha-D-glucosamine.

Belongs to the EPSP synthase family. MurA subfamily.

It localises to the cytoplasm. It catalyses the reaction phosphoenolpyruvate + UDP-N-acetyl-alpha-D-glucosamine = UDP-N-acetyl-3-O-(1-carboxyvinyl)-alpha-D-glucosamine + phosphate. It functions in the pathway cell wall biogenesis; peptidoglycan biosynthesis. With respect to regulation, in vitro inhibited by covalent binding of fosfomycin and the fungal product terreic acid in the presence of substrate UDP-N-acetylglucosamine, with an inactivation rate constant of 130 M(-1)sec(-1) for terreic acid. In terms of biological role, cell wall formation. Adds enolpyruvyl to UDP-N-acetylglucosamine. Target for the antibiotic fosfomycin. This is UDP-N-acetylglucosamine 1-carboxyvinyltransferase from Enterobacter cloacae subsp. cloacae (strain ATCC 13047 / DSM 30054 / NBRC 13535 / NCTC 10005 / WDCM 00083 / NCDC 279-56).